The sequence spans 1029 residues: Kinesin-like protein KIF17 (1029 aa).

In terms of domain architecture, Kinesin motor spans 5–335 (AVKVVVRCRP…LRYANRAKNI (331 aa)). 91–98 (GQTGSGKS) contributes to the ATP binding site. Residues 346 to 462 (KDALLREYQE…EENLRKETEA (117 aa)) adopt a coiled-coil conformation. Disordered regions lie at residues 523 to 569 (ELPK…MPTE) and 647 to 673 (VPAP…PPRP). The segment covering 532-551 (SEISLGSSESSSLEETSVSE) has biased composition (low complexity). Residues 657–673 (SDARPEAEAADDFPPRP) show a composition bias toward basic and acidic residues. Positions 739 to 846 (QQVLARLQLL…QLEKIDYLAT (108 aa)) form a coiled coil. 2 disordered regions span residues 908-931 (AVST…EPNM) and 968-1029 (KSLT…SEPL).

This sequence belongs to the TRAFAC class myosin-kinesin ATPase superfamily. Kinesin family. Homodimer. Interacts with APBA1 (via PDZ domain); the interaction is direct and is required for association of KIF17 with the cargo that is to be transported. Interacts with IFT B complex components IFT52 and IFT57. Interacts with IFT70B. Interacts with PIWIL1. Interacts with TBATA.

The protein localises to the cytoplasm. It localises to the cytoskeleton. Its subcellular location is the cell projection. The protein resides in the cilium. It is found in the dendrite. Its function is as follows. Dendrite-specific motor protein which, in association with the Apba1-containing complex (LIN-10-LIN-2-LIN-7 complex), transports vesicles containing N-methyl-D-aspartate (NMDA) receptor subunit NR2B along microtubules. This Homo sapiens (Human) protein is Kinesin-like protein KIF17 (KIF17).